We begin with the raw amino-acid sequence, 271 residues long: Ribosomal RNA small subunit methyltransferase A (271 aa).

Residues His-11, Leu-13, Gly-38, Glu-59, Asp-84, and Asn-109 each contribute to the S-adenosyl-L-methionine site.

Belongs to the class I-like SAM-binding methyltransferase superfamily. rRNA adenine N(6)-methyltransferase family. RsmA subfamily.

Its subcellular location is the cytoplasm. The enzyme catalyses adenosine(1518)/adenosine(1519) in 16S rRNA + 4 S-adenosyl-L-methionine = N(6)-dimethyladenosine(1518)/N(6)-dimethyladenosine(1519) in 16S rRNA + 4 S-adenosyl-L-homocysteine + 4 H(+). Functionally, specifically dimethylates two adjacent adenosines (A1518 and A1519) in the loop of a conserved hairpin near the 3'-end of 16S rRNA in the 30S particle. May play a critical role in biogenesis of 30S subunits. The polypeptide is Ribosomal RNA small subunit methyltransferase A (Trichormus variabilis (strain ATCC 29413 / PCC 7937) (Anabaena variabilis)).